Here is a 450-residue protein sequence, read N- to C-terminus: Phosphoglucosamine mutase (450 aa).

Catalysis depends on Ser-103, which acts as the Phosphoserine intermediate. Ser-103, Asp-243, Asp-245, and Asp-247 together coordinate Mg(2+). Phosphoserine is present on Ser-103.

It belongs to the phosphohexose mutase family. Mg(2+) serves as cofactor. Activated by phosphorylation.

It carries out the reaction alpha-D-glucosamine 1-phosphate = D-glucosamine 6-phosphate. In terms of biological role, catalyzes the conversion of glucosamine-6-phosphate to glucosamine-1-phosphate. The protein is Phosphoglucosamine mutase of Lactobacillus delbrueckii subsp. bulgaricus (strain ATCC BAA-365 / Lb-18).